Reading from the N-terminus, the 255-residue chain is MSKRIVVISDTQIPFDDRKQLKAVVGFIGDTQPDEVVHIGDLMDYPSPSRWTKGSSEEFAQRIKPDSEQAKTRFLAPLRAVYDGPVGVHEGNHDRRPFDYLHKFAPALVEYADQFKFENLLDFDGFGVTVLPEFYKVAPGWISTHGHRGGVRVTQKSADTAYNAMQRFGTSVIIGHTHRQGIKPHTWGYGGHQKVLWSMEVGNLMNMKLAQYLKGATANWQSGFGLLTVDGNHVKPELVPIVGGRFSVDGHVWEV.

This chain is Gene 54 protein (54), found in Mycobacterium phage D29 (Mycobacteriophage D29).